The chain runs to 484 residues: ATP synthase subunit beta (484 aa).

ATP is bound at residue 156-163; that stretch reads GGAGVGKT.

Belongs to the ATPase alpha/beta chains family. As to quaternary structure, F-type ATPases have 2 components, CF(1) - the catalytic core - and CF(0) - the membrane proton channel. CF(1) has five subunits: alpha(3), beta(3), gamma(1), delta(1), epsilon(1). CF(0) has three main subunits: a(1), b(2) and c(9-12). The alpha and beta chains form an alternating ring which encloses part of the gamma chain. CF(1) is attached to CF(0) by a central stalk formed by the gamma and epsilon chains, while a peripheral stalk is formed by the delta and b chains.

Its subcellular location is the cell inner membrane. It catalyses the reaction ATP + H2O + 4 H(+)(in) = ADP + phosphate + 5 H(+)(out). Produces ATP from ADP in the presence of a proton gradient across the membrane. The catalytic sites are hosted primarily by the beta subunits. In Rhizorhabdus wittichii (strain DSM 6014 / CCUG 31198 / JCM 15750 / NBRC 105917 / EY 4224 / RW1) (Sphingomonas wittichii), this protein is ATP synthase subunit beta.